The following is a 358-amino-acid chain: Phospho-N-acetylmuramoyl-pentapeptide-transferase (358 aa).

The next 10 membrane-spanning stretches (helical) occupy residues W28 to L48, T72 to L92, Y96 to Y116, F133 to Y153, G164 to S184, G196 to A216, V233 to F253, V260 to L280, L285 to V305, and K335 to L355.

It belongs to the glycosyltransferase 4 family. MraY subfamily. Mg(2+) is required as a cofactor.

It is found in the cell inner membrane. It catalyses the reaction UDP-N-acetyl-alpha-D-muramoyl-L-alanyl-gamma-D-glutamyl-meso-2,6-diaminopimeloyl-D-alanyl-D-alanine + di-trans,octa-cis-undecaprenyl phosphate = di-trans,octa-cis-undecaprenyl diphospho-N-acetyl-alpha-D-muramoyl-L-alanyl-D-glutamyl-meso-2,6-diaminopimeloyl-D-alanyl-D-alanine + UMP. Its pathway is cell wall biogenesis; peptidoglycan biosynthesis. Functionally, catalyzes the initial step of the lipid cycle reactions in the biosynthesis of the cell wall peptidoglycan: transfers peptidoglycan precursor phospho-MurNAc-pentapeptide from UDP-MurNAc-pentapeptide onto the lipid carrier undecaprenyl phosphate, yielding undecaprenyl-pyrophosphoryl-MurNAc-pentapeptide, known as lipid I. In Nitratidesulfovibrio vulgaris (strain ATCC 29579 / DSM 644 / CCUG 34227 / NCIMB 8303 / VKM B-1760 / Hildenborough) (Desulfovibrio vulgaris), this protein is Phospho-N-acetylmuramoyl-pentapeptide-transferase.